The primary structure comprises 960 residues: MSDTRETLAELEQRDAFIGRHIGPDEAEKTAMLNALGVADMETLISKTVPETIRIKEGLELDGPCTEAQALAELKAFAERNKVFKTYIGMGYYNTLTPTVILRNVLENPAWYTAYTPYQPEISQGRLEALLNFQTMIGDLTGMEMANASLLDEGTAAAEAMTMCRRVNGKNKSNVFFVAEDCLPQTIEVVKGRAEPLGIEVVVGDPQKDLQNHDYFAVLLQYPGVNGDVRDYRELIKTAHESNALAIMAADILSLTLLTPPGELGADIAIGNSQRFGVPLFFGGPHAAYIATKDEYKRSLPGRLVGVSVDANGDKAYRLALQTREQHIRRQNATSNICTAQALLAITASMYGAYHGPEGLKRIARRVHRLTTILAEGLKQAGRSVNTAHFFDTVSVATGGDTDAVYQAALQQKINLRRIDDNTLGVSLDETTTREDVAALLHVFASGKPVADVATLDSSAKDAIPAELRRQSAFMTHTVFNRYHSETEMLRYLRRLSDKDLALDRTMIPLGSCTMKLNATTEMTPVSWDGFCAIHPFAPLDQTEGYRALIADLERMLSAATGYAAFSLQPNAGSQGEYAGLLAIRAYHHSRGEGDRDVCLIPNSAHGTNPASAQMVGMKVVAVKCDDNGNVDLNDLRLKAEQHSAKLAALMATYPSTHGVFEEGIREVCSIVHQHGGQVYIDGANLNAMVGLCKPGQFGGDVSHLNLHKTFCIPHGGGGPGVGPIGVAAHLAPFLPGHSAMGETADKAIAPISAAPWGSAGILPISWTYIRMMGGEGLTEATKSAILNANYIAKRLEPHYPVLYTGSQGFVAHECIIDVRPFKDSCGVTVDDIAKRLIDFGFHAPTMSFPVPGTLMIEPTESESLAELDRFCDAMIAIREEIRAIENGEYDVDHSPLHHAPHTAADLVGDWDRPYSRERGVYPLKALKADKYWSPVGRIDNVYGDRNLVCACPPMTEYED.

N6-(pyridoxal phosphate)lysine is present on Lys709.

This sequence belongs to the GcvP family. As to quaternary structure, the glycine cleavage system is composed of four proteins: P, T, L and H. The cofactor is pyridoxal 5'-phosphate.

The catalysed reaction is N(6)-[(R)-lipoyl]-L-lysyl-[glycine-cleavage complex H protein] + glycine + H(+) = N(6)-[(R)-S(8)-aminomethyldihydrolipoyl]-L-lysyl-[glycine-cleavage complex H protein] + CO2. In terms of biological role, the glycine cleavage system catalyzes the degradation of glycine. The P protein binds the alpha-amino group of glycine through its pyridoxal phosphate cofactor; CO(2) is released and the remaining methylamine moiety is then transferred to the lipoamide cofactor of the H protein. This is Glycine dehydrogenase (decarboxylating) from Hahella chejuensis (strain KCTC 2396).